Consider the following 528-residue polypeptide: Na(+)/H(+) antiporter NhaB (528 aa).

11 helical membrane passes run 23-43, 45-65, 90-110, 136-156, 204-224, 237-257, 305-325, 350-370, 392-412, 450-470, and 479-499; these read VAII…NPFV, GWLL…CYPL, LVAN…IYFM, CFAA…AVVI, LLMH…VGEP, FGEF…CGLI, GIIA…VGLI, EEAL…AVII, LALF…VFVG, ATPN…APLI, and VMAL…IMFF.

It belongs to the NhaB Na(+)/H(+) (TC 2.A.34) antiporter family.

The protein resides in the cell inner membrane. It catalyses the reaction 2 Na(+)(in) + 3 H(+)(out) = 2 Na(+)(out) + 3 H(+)(in). Its function is as follows. Na(+)/H(+) antiporter that extrudes sodium in exchange for external protons. Can also transport lithium and potassium. In Vibrio parahaemolyticus serotype O3:K6 (strain RIMD 2210633), this protein is Na(+)/H(+) antiporter NhaB.